The chain runs to 603 residues: Adenine deaminase 1 (603 aa).

The protein belongs to the metallo-dependent hydrolases superfamily. Adenine deaminase family. The cofactor is Mn(2+).

It catalyses the reaction adenine + H2O + H(+) = hypoxanthine + NH4(+). This Carboxydothermus hydrogenoformans (strain ATCC BAA-161 / DSM 6008 / Z-2901) protein is Adenine deaminase 1.